The following is a 255-amino-acid chain: MPLELVTVPCLSDNYAFLVHDAGTGETSVVDVPEAGPILKALEERGWHLSQILLTHHHSDHVAGVEELRAATGARVAGAAADAHRLPPLDLELAEGDLVRVGASEGRVIEVPGHTVGHIAFHFPDSSLAFTGDSLMAMGCGRLFEGTAEAMWQSLRKLSALPPETMICSGHEYAASNARFAATLEPDSPMLIFRVGSIAAARKEGRPTVPSHLSDEIATNPFLRAGEASLKAAVGMVDAEDAEVFAEIRRRKDKF.

7 residues coordinate Zn(2+): histidine 56, histidine 58, aspartate 60, histidine 61, histidine 114, aspartate 133, and histidine 171.

It belongs to the metallo-beta-lactamase superfamily. Glyoxalase II family. In terms of assembly, monomer. Requires Zn(2+) as cofactor.

It carries out the reaction an S-(2-hydroxyacyl)glutathione + H2O = a 2-hydroxy carboxylate + glutathione + H(+). Its pathway is secondary metabolite metabolism; methylglyoxal degradation; (R)-lactate from methylglyoxal: step 2/2. Thiolesterase that catalyzes the hydrolysis of S-D-lactoyl-glutathione to form glutathione and D-lactic acid. The chain is Hydroxyacylglutathione hydrolase from Cereibacter sphaeroides (strain ATCC 17023 / DSM 158 / JCM 6121 / CCUG 31486 / LMG 2827 / NBRC 12203 / NCIMB 8253 / ATH 2.4.1.) (Rhodobacter sphaeroides).